The following is a 193-amino-acid chain: Xanthine phosphoribosyltransferase (193 aa).

2 residues coordinate xanthine: Leu-20 and Asn-27. Residue Ala-128–Ala-132 coordinates 5-phospho-alpha-D-ribose 1-diphosphate. Xanthine is bound at residue Lys-156.

Belongs to the purine/pyrimidine phosphoribosyltransferase family. Xpt subfamily. In terms of assembly, homodimer.

It is found in the cytoplasm. It catalyses the reaction XMP + diphosphate = xanthine + 5-phospho-alpha-D-ribose 1-diphosphate. It functions in the pathway purine metabolism; XMP biosynthesis via salvage pathway; XMP from xanthine: step 1/1. Its function is as follows. Converts the preformed base xanthine, a product of nucleic acid breakdown, to xanthosine 5'-monophosphate (XMP), so it can be reused for RNA or DNA synthesis. The chain is Xanthine phosphoribosyltransferase from Exiguobacterium sp. (strain ATCC BAA-1283 / AT1b).